The following is a 353-amino-acid chain: Forkhead box protein I3-A (353 aa).

A DNA-binding region (fork-head) is located at residues 116-210 (RPPYSYSALI…DNGNFRRKRK (95 aa)). Positions 201 to 255 (DNGNFRRKRKRKSDSLAEEEGKGYSGSDSALSSPKNPSDSSERGNSPISTDQAPC) are disordered. A Nuclear localization signal motif is present at residues 206–212 (RRKRKRK). Basic and acidic residues predominate over residues 213–222 (SDSLAEEEGK). Residues 226–252 (GSDSALSSPKNPSDSSERGNSPISTDQ) show a composition bias toward polar residues.

Expressed in ionocyte precursors.

It localises to the nucleus. In terms of biological role, transcription factor required for epithelial cell differentiation. Involved in specification of skin ionocytes from epidermal precursors. This Danio rerio (Zebrafish) protein is Forkhead box protein I3-A.